Consider the following 315-residue polypeptide: Cobalamin biosynthesis protein CobD (315 aa).

Helical transmembrane passes span 54–74 (GLLFVLTVGMTGAVSWFILFL), 78–98 (IAYWLYVAVFVYLGYTTLAMT), 152–172 (ADGVIAPLFYLFIGGPVLALM), 203–223 (IANFIPARLAWFFLVIASFIL), and 295–315 (LLYMASTIAFIMFASIYLLLF).

The protein belongs to the CobD/CbiB family.

It localises to the cell membrane. Its pathway is cofactor biosynthesis; adenosylcobalamin biosynthesis. Converts cobyric acid to cobinamide by the addition of aminopropanol on the F carboxylic group. The polypeptide is Cobalamin biosynthesis protein CobD (Listeria monocytogenes serovar 1/2a (strain ATCC BAA-679 / EGD-e)).